The sequence spans 210 residues: ATP-dependent Clp protease proteolytic subunit (210 aa).

The active-site Nucleophile is the Ser107. The active site involves His132.

This sequence belongs to the peptidase S14 family. Fourteen ClpP subunits assemble into 2 heptameric rings which stack back to back to give a disk-like structure with a central cavity, resembling the structure of eukaryotic proteasomes.

The protein resides in the cytoplasm. The catalysed reaction is Hydrolysis of proteins to small peptides in the presence of ATP and magnesium. alpha-casein is the usual test substrate. In the absence of ATP, only oligopeptides shorter than five residues are hydrolyzed (such as succinyl-Leu-Tyr-|-NHMec, and Leu-Tyr-Leu-|-Tyr-Trp, in which cleavage of the -Tyr-|-Leu- and -Tyr-|-Trp bonds also occurs).. In terms of biological role, cleaves peptides in various proteins in a process that requires ATP hydrolysis. Has a chymotrypsin-like activity. Plays a major role in the degradation of misfolded proteins. The polypeptide is ATP-dependent Clp protease proteolytic subunit (Cereibacter sphaeroides (strain ATCC 17029 / ATH 2.4.9) (Rhodobacter sphaeroides)).